The sequence spans 231 residues: 2-C-methyl-D-erythritol 4-phosphate cytidylyltransferase (231 aa).

Belongs to the IspD/TarI cytidylyltransferase family. IspD subfamily.

It catalyses the reaction 2-C-methyl-D-erythritol 4-phosphate + CTP + H(+) = 4-CDP-2-C-methyl-D-erythritol + diphosphate. It functions in the pathway isoprenoid biosynthesis; isopentenyl diphosphate biosynthesis via DXP pathway; isopentenyl diphosphate from 1-deoxy-D-xylulose 5-phosphate: step 2/6. Functionally, catalyzes the formation of 4-diphosphocytidyl-2-C-methyl-D-erythritol from CTP and 2-C-methyl-D-erythritol 4-phosphate (MEP). The chain is 2-C-methyl-D-erythritol 4-phosphate cytidylyltransferase from Clostridium novyi (strain NT).